The primary structure comprises 412 residues: Tyrosine--tRNA ligase (412 aa).

A 'HIGH' region motif is present at residues P50–H59. The 'KMSKS' region motif lies at K244–S248. K247 lines the ATP pocket. Positions V348–E411 constitute an S4 RNA-binding domain.

It belongs to the class-I aminoacyl-tRNA synthetase family. TyrS type 2 subfamily. Homodimer.

It localises to the cytoplasm. It carries out the reaction tRNA(Tyr) + L-tyrosine + ATP = L-tyrosyl-tRNA(Tyr) + AMP + diphosphate + H(+). Functionally, catalyzes the attachment of tyrosine to tRNA(Tyr) in a two-step reaction: tyrosine is first activated by ATP to form Tyr-AMP and then transferred to the acceptor end of tRNA(Tyr). This chain is Tyrosine--tRNA ligase, found in Prochlorococcus marinus (strain MIT 9312).